The primary structure comprises 117 residues: Acidic phospholipase A2 PA-1G (117 aa).

Intrachain disulfides connect C11/C71, C27/C117, C29/C45, C44/C98, C51/C91, C60/C84, and C78/C89. 3 residues coordinate Ca(2+): Y28, G30, and G32. H48 is an active-site residue. D49 contacts Ca(2+). The active site involves D92.

The protein belongs to the phospholipase A2 family. Group I subfamily. D49 sub-subfamily. Ca(2+) is required as a cofactor. Expressed by the venom gland.

The protein resides in the secreted. The enzyme catalyses a 1,2-diacyl-sn-glycero-3-phosphocholine + H2O = a 1-acyl-sn-glycero-3-phosphocholine + a fatty acid + H(+). Functionally, PLA2 catalyzes the calcium-dependent hydrolysis of the 2-acyl groups in 3-sn-phosphoglycerides. This Pseudechis australis (Mulga snake) protein is Acidic phospholipase A2 PA-1G.